Reading from the N-terminus, the 477-residue chain is UDP-sulfoquinovose synthase, chloroplastic (477 aa).

The tract at residues 1–21 (MAHLLSASCPSVISLSSSSSK) is disordered. A chloroplast-targeting transit peptide spans 1-86 (MAHLLSASCP…TNNSSSKPKR (86 aa)). Residues 95–96 (YC), 115–119 (DNLVR), 158–159 (DI), Arg184, and Asn202 each bind NAD(+). Arg184 contributes to the substrate binding site. 2 residues coordinate substrate: Thr228 and Tyr265. Thr228 is an active-site residue. Residues Tyr265 and Lys269 each coordinate NAD(+). The active-site Proton acceptor is Tyr265. Residue Lys269 is part of the active site. Gln292 contacts substrate. Residue Val295 coordinates NAD(+). Substrate is bound by residues 322–325 (ALNR), 337–339 (TVY), and 410–412 (RVE).

It belongs to the NAD(P)-dependent epimerase/dehydratase family. Homodimer. It depends on NAD(+) as a cofactor.

The protein localises to the plastid. Its subcellular location is the chloroplast. The enzyme catalyses sulfite + UDP-alpha-D-glucose + H(+) = UDP-alpha-D-6-sulfoquinovose + H2O. Its activity is regulated as follows. Concentrations above 100 uM sulfite inhibit the reaction. In terms of biological role, involved in the biosynthesis of sulfolipids found in thylakoid membranes. Converts UDP-glucose and sulfite to the sulfolipid head group precursor UDP-sulfoquinovose. This chain is UDP-sulfoquinovose synthase, chloroplastic (SQD1), found in Arabidopsis thaliana (Mouse-ear cress).